The sequence spans 121 residues: Small ribosomal subunit protein uS13 (121 aa).

Positions 97–121 are disordered; the sequence is VRGQRTRTNARTRRGARKTVAGKKK. The span at 100–121 shows a compositional bias: basic residues; it reads QRTRTNARTRRGARKTVAGKKK.

It belongs to the universal ribosomal protein uS13 family. Part of the 30S ribosomal subunit. Forms a loose heterodimer with protein S19. Forms two bridges to the 50S subunit in the 70S ribosome.

Functionally, located at the top of the head of the 30S subunit, it contacts several helices of the 16S rRNA. In the 70S ribosome it contacts the 23S rRNA (bridge B1a) and protein L5 of the 50S subunit (bridge B1b), connecting the 2 subunits; these bridges are implicated in subunit movement. Contacts the tRNAs in the A and P-sites. The protein is Small ribosomal subunit protein uS13 of Synechococcus sp. (strain WH7803).